The chain runs to 246 residues: Purine nucleoside phosphorylase ORF3 (246 aa).

3 residues coordinate Zn(2+): histidine 71, cysteine 110, and histidine 127.

This sequence belongs to the purine nucleoside phosphorylase YfiH/LACC1 family. Homodimer. The cofactor is Cu(2+). Requires Zn(2+) as cofactor.

The catalysed reaction is adenosine + phosphate = alpha-D-ribose 1-phosphate + adenine. It carries out the reaction S-methyl-5'-thioadenosine + phosphate = 5-(methylsulfanyl)-alpha-D-ribose 1-phosphate + adenine. It catalyses the reaction inosine + phosphate = alpha-D-ribose 1-phosphate + hypoxanthine. The enzyme catalyses adenosine + H2O + H(+) = inosine + NH4(+). Purine nucleoside enzyme that catalyzes the phosphorolysis of adenosine and inosine nucleosides, yielding D-ribose 1-phosphate and the respective free bases, adenine and hypoxanthine. Also catalyzes the phosphorolysis of S-methyl-5'-thioadenosine into adenine and S-methyl-5-thio-alpha-D-ribose 1-phosphate. Also has adenosine deaminase activity. The protein is Purine nucleoside phosphorylase ORF3 of Streptomyces griseus.